A 361-amino-acid chain; its full sequence is S-adenosylmethionine-dependent nucleotide dehydratase RSAD2 (361 aa).

One can recognise a Radical SAM core domain in the interval 69-289 (PTTPTSVNYH…LERHKEVSCL (221 aa)). Positions 83, 87, and 90 each coordinate [4Fe-4S] cluster. Lysine 197 bears the N6-acetyllysine mark. Lysine 206 participates in a covalent cross-link: Glycyl lysine isopeptide (Lys-Gly) (interchain with G-Cter in ubiquitin).

Belongs to the radical SAM superfamily. RSAD2 family. As to quaternary structure, homodimer. Interacts with IRAK1 and TRAF6. Interacts with FPPS. Interacts with HADHB. Interacts (via C-terminus) with VAPA/VAP33 (via C-terminus). In terms of assembly, (Microbial infection) Interacts with human cytomegalovirus/HHV-5 protein vMIA/UL37; this interaction results in RSAD2/viperin relocalization from the endoplasmic reticulum to the mitochondria. (Microbial infection) Interacts (via N-terminus) with enterovirus A71 protein 2C; this interaction inhibits viral replication. As to quaternary structure, (Microbial infection) Interacts with herpes simplex virus 1/HHV-1 glycoprotein D; this interaction inhibits HHV-1 replication by facilitating IRF7-mediated IFN-beta production. It depends on [4Fe-4S] cluster as a cofactor. Acetylated by HAT1. HAT1-mediated acetylation of Lys-197 in turn recruits UBE4A that stimulates RSAD2 polyubiquitination leading to proteasomal degradation. In terms of processing, 'Lys-6'-linked polyubiquitination at Lys-206 leads to RSAD2 protein degradation.

The protein resides in the endoplasmic reticulum membrane. It is found in the golgi apparatus. Its subcellular location is the endoplasmic reticulum. It localises to the lipid droplet. The protein localises to the mitochondrion. The protein resides in the mitochondrion inner membrane. It is found in the mitochondrion outer membrane. It carries out the reaction CTP + AH2 + S-adenosyl-L-methionine = 3'-deoxy-3',4'-didehydro-CTP + 5'-deoxyadenosine + L-methionine + A + H2O + H(+). IRAK1 and TRAF6 synergistically activate RSAD2 increasing its activity with CTP as substrate about 10-fold. Interferon-inducible antiviral protein which plays a major role in the cell antiviral state induced by type I and type II interferon. Catalyzes the conversion of cytidine triphosphate (CTP) to 3'-deoxy-3',4'-didehydro-CTP (ddhCTP) via a SAM-dependent radical mechanism. In turn, ddhCTP acts as a chain terminator for the RNA-dependent RNA polymerases from multiple viruses and directly inhibits viral replication. Therefore, inhibits a wide range of DNA and RNA viruses, including human cytomegalovirus (HCMV), hepatitis C virus (HCV), west Nile virus (WNV), dengue virus, sindbis virus, influenza A virus, sendai virus, vesicular stomatitis virus (VSV), zika virus, and human immunodeficiency virus (HIV-1). Also promotes TLR7 and TLR9-dependent production of IFN-beta production in plasmacytoid dendritic cells (pDCs) by facilitating 'Lys-63'-linked ubiquitination of IRAK1 by TRAF6. Plays a role in CD4+ T-cells activation and differentiation. Facilitates T-cell receptor (TCR)-mediated GATA3 activation and optimal T-helper 2 (Th2) cytokine production by modulating NFKB1 and JUNB activities. Can inhibit secretion of soluble proteins. The sequence is that of S-adenosylmethionine-dependent nucleotide dehydratase RSAD2 from Homo sapiens (Human).